Here is a 222-residue protein sequence, read N- to C-terminus: Putative germin-like protein 3-2 (222 aa).

An N-terminal signal peptide occupies residues 1 to 22; the sequence is MAKLILATFAVVFLALAATSLA. Cysteine 32 and cysteine 50 are disulfide-bonded. N-linked (GlcNAc...) asparagine glycosylation is found at asparagine 55 and asparagine 71. The region spanning 64 to 212 is the Cupin type-1 domain; sequence DGLTNAGNTT…AFQVDGGMVE (149 aa). Mn(2+) contacts are provided by histidine 112, histidine 114, glutamate 119, and histidine 158. A glycan (N-linked (GlcNAc...) asparagine) is linked at asparagine 165.

It belongs to the germin family. As to quaternary structure, oligomer (believed to be a pentamer but probably hexamer).

It localises to the secreted. The protein resides in the extracellular space. Its subcellular location is the apoplast. May play a role in plant defense. Probably has no oxalate oxidase activity even if the active site is conserved. The protein is Putative germin-like protein 3-2 of Oryza sativa subsp. japonica (Rice).